The sequence spans 448 residues: 5-hydroxytryptamine receptor 7 (448 aa).

The Extracellular segment spans residues 1 to 86; it reads MMDVNSSGRP…INYGRVEKVV (86 aa). Residues asparagine 5 and asparagine 69 are each glycosylated (N-linked (GlcNAc...) asparagine). Residues 87-111 traverse the membrane as a helical segment; that stretch reads IGSILTLITLLTIAGNCLVVISVCF. The Cytoplasmic portion of the chain corresponds to 112-121; sequence VKKLRQPSNY. A helical membrane pass occupies residues 122–143; it reads LIVSLALADLSVAVAVMPFVSV. Over 144 to 155 the chain is Extracellular; sequence TDLIGGKWIFGH. Residues 156 to 181 form a helical membrane-spanning segment; that stretch reads FFCNVFIAMDVMCCTASIMTLCVISI. An intrachain disulfide couples cysteine 158 to cysteine 234. Aspartate 165 contacts serotonin. Residues 182–201 are Cytoplasmic-facing; the sequence is DRYLGITRPLTYPVRQNGKC. Residues 202-222 traverse the membrane as a helical segment; sequence MAKMILSVWLLSASITLPPLF. At 223–240 the chain is on the extracellular side; that stretch reads GWAQNVNDDKVCLISQDF. A helical transmembrane segment spans residues 241-263; sequence GYTIYSTAVAFYIPMSVMLFMYY. Over 264 to 329 the chain is Cytoplasmic; that stretch reads QIYKAARKSA…SIFKREQKAA (66 aa). Residues 330 to 355 form a helical membrane-spanning segment; it reads TTLGIIVGAFTVCWLPFFLLSTARPF. At 356 to 366 the chain is on the extracellular side; it reads ICGTSCSCIPL. A helical membrane pass occupies residues 367–390; that stretch reads WVERTCLWLGYANSLINPFIYAFF. Over 391 to 448 the chain is Cytoplasmic; sequence NRDLRTTYRSLLQCQYRNINRKLSAAGMHEALKLAERPERSEFVLQNCDHCGKKGHDT. Cysteine 404 carries S-palmitoyl cysteine lipidation.

It belongs to the G-protein coupled receptor 1 family.

The protein localises to the cell membrane. Functionally, G-protein coupled receptor for 5-hydroxytryptamine (serotonin), a biogenic hormone that functions as a neurotransmitter, a hormone and a mitogen. Ligand binding causes a conformation change that triggers signaling via guanine nucleotide-binding proteins (G proteins) and modulates the activity of downstream effectors. HTR7 is coupled to G(s) G alpha proteins and mediates activation of adenylate cyclase activity. This chain is 5-hydroxytryptamine receptor 7 (Htr7), found in Mus musculus (Mouse).